The following is a 171-amino-acid chain: MPLLDSFCVDHVKMKAPGVRLAKSMKTPKGDDISVFDLRFCKPNEEILPEKGTHTLEHLFAGFMRNHLNGNGVEIIDISPMGCRTGFYMSVIGTPSEEAVKKAWLASMKDILEVKDQDKIPELNKFQCGTYKMHSLDEAHAIASKILAQGLVIINNDEIKLDVDAMGLKKH.

3 residues coordinate Fe cation: H54, H58, and C128.

The protein belongs to the LuxS family. Homodimer. Fe cation serves as cofactor.

It carries out the reaction S-(5-deoxy-D-ribos-5-yl)-L-homocysteine = (S)-4,5-dihydroxypentane-2,3-dione + L-homocysteine. Its function is as follows. Involved in the synthesis of autoinducer 2 (AI-2) which is secreted by bacteria and is used to communicate both the cell density and the metabolic potential of the environment. The regulation of gene expression in response to changes in cell density is called quorum sensing. Catalyzes the transformation of S-ribosylhomocysteine (RHC) to homocysteine (HC) and 4,5-dihydroxy-2,3-pentadione (DPD). This Campylobacter concisus (strain 13826) protein is S-ribosylhomocysteine lyase.